The following is a 541-amino-acid chain: Eukaryotic translation initiation factor 3 subunit L (541 aa).

The 209-residue stretch at 308–516 (TFSDILLYIQ…IHIADTKVSH (209 aa)) folds into the PCI domain.

Belongs to the eIF-3 subunit L family. As to quaternary structure, component of the eukaryotic translation initiation factor 3 (eIF-3) complex. The eIF-3 complex interacts with pix.

The protein localises to the cytoplasm. In terms of biological role, component of the eukaryotic translation initiation factor 3 (eIF-3) complex, which is involved in protein synthesis of a specialized repertoire of mRNAs and, together with other initiation factors, stimulates binding of mRNA and methionyl-tRNAi to the 40S ribosome. The eIF-3 complex specifically targets and initiates translation of a subset of mRNAs involved in cell proliferation. The polypeptide is Eukaryotic translation initiation factor 3 subunit L (Drosophila pseudoobscura pseudoobscura (Fruit fly)).